We begin with the raw amino-acid sequence, 182 residues long: Putative CTD phosphatase-like protein 355R (182 aa).

Residues 1–180 form the FCP1 homology domain; that stretch reads MKNIFLDLDN…MRLKDVLNRH (180 aa).

This sequence belongs to the IIV-6 355R family.

Its function is as follows. May function as a phosphatase. This is Putative CTD phosphatase-like protein 355R from Invertebrate iridescent virus 6 (IIV-6).